The chain runs to 83 residues: Protein MATERNALLY EXPRESSED GENE 3 (83 aa).

The signal sequence occupies residues 1 to 22 (MQWLAFVAPRWRCVCDQELSAQ). Cysteine 60 and cysteine 82 form a disulfide bridge.

The protein belongs to the MEG family. Expressed in endosperm, anther and pollen.

The polypeptide is Protein MATERNALLY EXPRESSED GENE 3 (MEG3) (Zea mays (Maize)).